Consider the following 335-residue polypeptide: 1D-myo-inositol 2-acetamido-2-deoxy-alpha-D-glucopyranoside deacetylase (335 aa).

Positions 19, 22, and 158 each coordinate Zn(2+).

Belongs to the MshB deacetylase family. The cofactor is Zn(2+).

The enzyme catalyses 1D-myo-inositol 2-acetamido-2-deoxy-alpha-D-glucopyranoside + H2O = 1D-myo-inositol 2-amino-2-deoxy-alpha-D-glucopyranoside + acetate. Functionally, catalyzes the deacetylation of 1D-myo-inositol 2-acetamido-2-deoxy-alpha-D-glucopyranoside (GlcNAc-Ins) in the mycothiol biosynthesis pathway. This chain is 1D-myo-inositol 2-acetamido-2-deoxy-alpha-D-glucopyranoside deacetylase, found in Corynebacterium urealyticum (strain ATCC 43042 / DSM 7109).